An 883-amino-acid chain; its full sequence is Alanine--tRNA ligase (883 aa).

Residues histidine 560, histidine 564, cysteine 665, and histidine 669 each contribute to the Zn(2+) site.

Belongs to the class-II aminoacyl-tRNA synthetase family. Zn(2+) is required as a cofactor.

Its subcellular location is the cytoplasm. The catalysed reaction is tRNA(Ala) + L-alanine + ATP = L-alanyl-tRNA(Ala) + AMP + diphosphate. In terms of biological role, catalyzes the attachment of alanine to tRNA(Ala) in a two-step reaction: alanine is first activated by ATP to form Ala-AMP and then transferred to the acceptor end of tRNA(Ala). Also edits incorrectly charged Ser-tRNA(Ala) and Gly-tRNA(Ala) via its editing domain. In Mesomycoplasma hyopneumoniae (strain 7448) (Mycoplasma hyopneumoniae), this protein is Alanine--tRNA ligase.